Reading from the N-terminus, the 570-residue chain is MSEKHPGPLVVEGKLTDAERMKLESNYLRGTIAEDLNDGLTGGFKGDNFLLIRFHGMYQQDDRDIRAERAEQKLEPRHAMLLRCRLPGGVITTKQWQAIDKFAGENTIYGSIRLTNRQTFQFHGILKKNVKPVHQMLHSVGLDALATANDMNRNVLCTSNPYESQLHAEAYEWAKKISEHLLPRTRAYAEIWLDQEKVATTDEEPILGQTYLPRKFKTTVVIPPQNDIDLHANDMNFVAIAENGKLVGFNLLVGGGLSIEHGNKKTYARTASEFGYLPLEHTLAVAEAVVTTQRDWGNRTDRKNAKTKYTLERVGVETFKAEVERRAGIKFEPIRPYEFTGRGDRIGWVKGIDDNWHLTLFIENGRILDYPGRPLKTGLLEIAKIHKGDFRITANQNLIIAGVPESEKAKIEKIAKESGLMNAVTPQRENSMACVSFPTCPLAMAEAERFLPSFIDKIDNLMAKHGVSDEHIVMRVTGCPNGCGRAMLAEVGLVGKAPGRYNLHLGGNRIGTRIPRMYKENITEPEILASLDELIGRWAKEREAGEGFGDFTVRAGIIRPVLDPARDLWD.

Cysteine 434, cysteine 440, cysteine 479, and cysteine 483 together coordinate [4Fe-4S] cluster. Cysteine 483 lines the siroheme pocket.

Belongs to the nitrite and sulfite reductase 4Fe-4S domain family. As to quaternary structure, alpha(8)-beta(8). The alpha component is a flavoprotein, the beta component is a hemoprotein. The cofactor is siroheme. [4Fe-4S] cluster is required as a cofactor.

It catalyses the reaction hydrogen sulfide + 3 NADP(+) + 3 H2O = sulfite + 3 NADPH + 4 H(+). It functions in the pathway sulfur metabolism; hydrogen sulfide biosynthesis; hydrogen sulfide from sulfite (NADPH route): step 1/1. Component of the sulfite reductase complex that catalyzes the 6-electron reduction of sulfite to sulfide. This is one of several activities required for the biosynthesis of L-cysteine from sulfate. In Escherichia coli (strain SMS-3-5 / SECEC), this protein is Sulfite reductase [NADPH] hemoprotein beta-component.